The primary structure comprises 491 residues: MINLNDVSYKYNDTAAQAIQHISLSVKKGELVVITGKSGCGKTTLFRCVNGLCPRFYEGEITGSLTLNGKVLSSMRICDISNIAASVFQNPESQFFTTDVLSDLVYPCENCGIEKEEIQERLHRVTKLLSLEPLLNRKLSELSGGEKQKIAIASVLMLDTRVVLMDEPSSNLDYQSVELLTQILAQLKSKGYTLLIIEHRLHYLAELCDRLIVMENGSIVREYEKDLLCTIGNDEFHKQGLRGLHLFQNNSNTLITPQRQHTDKRLLTLHDIHFGYRKNTEVLKGIHLSIYPGDKIALIGKNGCGKTTLGKILCGLKKEQSGTVLLDGRSFPARVRSKTAGYVMQNVDFQLFGCSVYDDLLLGNEALPDKENRIQTVLEKLSLSALQEQHPTTLSMGQKQRLVVAASFLQNKRLTIFDEPTSGLDYGSMQNVCALIDSITGKTNASVIITHDYEFILNTCNRAVLLEDGQIKEDFQLNGSMQLEYIFKERL.

ABC transporter domains follow at residues 2–241 and 267–491; these read INLN…KQGL and LTLH…KERL. ATP-binding positions include 36–43 and 300–307; these read GKSGCGKT and GKNGCGKT.

It belongs to the ABC transporter superfamily.

It localises to the cell inner membrane. Functionally, probably part of an ABC transporter complex. Responsible for energy coupling to the transport system. The chain is Putative ABC transporter ATP-binding protein TDE_0906 from Treponema denticola (strain ATCC 35405 / DSM 14222 / CIP 103919 / JCM 8153 / KCTC 15104).